Consider the following 1150-residue polypeptide: ATP-dependent DNA helicase Q-like 4B (1150 aa).

Disordered stretches follow at residues 124–143 (TPAI…GSTF) and 154–179 (CAHN…FSSS). The span at 132-142 (TSRTSSTKGST) shows a compositional bias: low complexity. Residues 327–361 (DHVEQLHQKRLLLKKQIQQLEILIHNKERKKSQCL) are a coiled coil. Residues 416–428 (YDISSGSEEREQS) show a composition bias toward basic and acidic residues. The interval 416 to 446 (YDISSGSEEREQSVSEVIDVTDTESSNDKKW) is disordered. Residues 478-653 (INATMSGCDV…VQALGLVNCV (176 aa)) form the Helicase ATP-binding domain. 491–498 (MPTGGGKS) contacts ATP. A DEAH box motif is present at residues 597–600 (DEAH). The region spanning 678 to 823 (DIDKFIRENH…QMKMGYNCKA (146 aa)) is the Helicase C-terminal domain. An HRDC domain is found at 1029–1111 (SNLSGILLTA…DSTINDHYKT (83 aa)). The disordered stretch occupies residues 1106–1150 (NDHYKTRPGSGKRRRDENVNPNVAEDDDPDWSASQSHKKVVKNKK). Residues 1141-1150 (SHKKVVKNKK) are compositionally biased toward basic residues.

It belongs to the helicase family. RecQ subfamily. Requires Mg(2+) as cofactor. The cofactor is Mn(2+). In terms of tissue distribution, mostly expressed in roots, seedlings, shoots, shoot apical mersitem, flowers, and siliques.

Its subcellular location is the nucleus. The catalysed reaction is Couples ATP hydrolysis with the unwinding of duplex DNA by translocating in the 3'-5' direction.. It carries out the reaction ATP + H2O = ADP + phosphate + H(+). Its function is as follows. 3'-5' DNA helicase that may play a role in the repair of DNA. Required to promote but not to suppress crossovers. This is ATP-dependent DNA helicase Q-like 4B (RECQL4B) from Arabidopsis thaliana (Mouse-ear cress).